The primary structure comprises 236 residues: Probable transcriptional activator protein TraR (236 aa).

Residues Val169–Gly234 form the HTH luxR-type domain. The segment at residues Ala193–Asp212 is a DNA-binding region (H-T-H motif).

This sequence belongs to the autoinducer-regulated transcriptional regulatory protein family.

Functionally, positive regulation of conjugal transfer. TraR activates target genes in the presence of AAI and also activates traR and traI themselves. The sequence is that of Probable transcriptional activator protein TraR (traR) from Sinorhizobium fredii (strain NBRC 101917 / NGR234).